A 120-amino-acid polypeptide reads, in one-letter code: Large ribosomal subunit protein uL18 (120 aa).

The protein belongs to the universal ribosomal protein uL18 family. In terms of assembly, part of the 50S ribosomal subunit; part of the 5S rRNA/L5/L18/L25 subcomplex. Contacts the 5S and 23S rRNAs.

Functionally, this is one of the proteins that bind and probably mediate the attachment of the 5S RNA into the large ribosomal subunit, where it forms part of the central protuberance. The chain is Large ribosomal subunit protein uL18 from Bartonella bacilliformis (strain ATCC 35685 / KC583 / Herrer 020/F12,63).